A 333-amino-acid chain; its full sequence is Acyl-CoA wax alcohol acyltransferase 2 (333 aa).

3 consecutive transmembrane segments (helical) span residues 15–35 (VFAL…VIIV), 38–58 (YLVV…WLAF), and 130–150 (TFPG…VPFL).

Belongs to the diacylglycerol acyltransferase family. In terms of assembly, monomer. Expressed in Mueller cells of the retina (at protein level). Abundant in tissues rich in sebaceous glands such as the preputial gland and eyelid.

The protein resides in the endoplasmic reticulum membrane. The catalysed reaction is a long chain fatty alcohol + a fatty acyl-CoA = a wax ester + CoA. It carries out the reaction all-trans-retinol + an acyl-CoA = an all-trans-retinyl ester + CoA. It catalyses the reaction an acyl-CoA + a 1,2-diacyl-sn-glycerol = a triacyl-sn-glycerol + CoA. The enzyme catalyses 9-cis-retinol + a fatty acyl-CoA = 9-cis-retinyl ester + CoA. The catalysed reaction is 11-cis-retinol + a fatty acyl-CoA = 11-cis-retinyl ester + CoA. It carries out the reaction 13-cis-retinol + a fatty acyl-CoA = 13-cis-retinyl ester + CoA. It catalyses the reaction a 1-acylglycerol + an acyl-CoA = a 1,2-diacylglycerol + CoA. The enzyme catalyses 1-O-alkylglycerol + an acyl-CoA = 1-O-alkyl-3-acylglycerol + CoA. The catalysed reaction is a 2-acylglycerol + an acyl-CoA = a 1,2-diacyl-sn-glycerol + CoA. It carries out the reaction 2-(9Z-octadecenoyl)-glycerol + hexadecanoyl-CoA = 1-hexadecanoyl-2-(9Z-octadecenoyl)-sn-glycerol + CoA. It catalyses the reaction 1,2-di-(9Z-octadecenoyl)-sn-glycerol + hexadecanoyl-CoA = 1,2-di-(9Z)-octadecenoyl-3-hexadecanoyl-sn-glycerol + CoA. The enzyme catalyses hexadecan-1-ol + hexadecanoyl-CoA = hexadecanyl hexadecanoate + CoA. The catalysed reaction is hexadecane-1,2-diol + hexadecanoyl-CoA = 2-hydroxyhexadecyl hexadecanoate + CoA. It carries out the reaction all-trans-retinol + hexadecanoyl-CoA = all-trans-retinyl hexadecanoate + CoA. It catalyses the reaction 1,2-di-(9Z-octadecenoyl)-sn-glycerol + (9Z)-octadecenoyl-CoA = 1,2,3-tri-(9Z-octadecenoyl)-glycerol + CoA. The enzyme catalyses hexadecan-1-ol + (9Z)-octadecenoyl-CoA = hexadecanyl (9Z)-octadecenoate + CoA. The catalysed reaction is (9Z)-hexadecen-1-ol + (9Z)-octadecenoyl-CoA = 1-O-(9Z)-hexadecenyl (9Z)-octadecenoate + CoA. It carries out the reaction octadecan-1-ol + (9Z)-octadecenoyl-CoA = 1-O-octadecyl (9Z)-octadecenoate + CoA. It catalyses the reaction (9Z)-octadecen-1-ol + (9Z)-octadecenoyl-CoA = 1-O-(9Z)-octadecenyl (9Z)-octadecenoate + CoA. The enzyme catalyses hexadecan-1-ol + (9Z)-hexadecenoyl-CoA = 1-O-hexadecyl (9Z)-hexadecenoate + CoA. The catalysed reaction is hexadecan-1-ol + octadecanoyl-CoA = hexadecanyl octadecanoate + CoA. It carries out the reaction 11-cis-retinol + hexadecanoyl-CoA = 11-cis-retinyl hexadecanoate + CoA. It catalyses the reaction 1-O-(9Z-octadecenyl)-glycerol + (9Z)-octadecenoyl-CoA = 1-O-(9Z-octadecyl)-3-(9Z-octadecenoyl)-glycerol + CoA. The enzyme catalyses 1-(9Z-octadecenoyl)-glycerol + (9Z)-octadecenoyl-CoA = 1,2-di-(9Z-octadecenoyl)-glycerol + CoA. The catalysed reaction is 11-cis-retinol + tetradecanoyl-CoA = 11-cis-retinyl tetradecanoate + CoA. It carries out the reaction 9-cis-retinol + tetradecanoyl-CoA = 9-cis-retinyl tetradecanoate + CoA. It catalyses the reaction 9-cis-retinol + hexadecanoyl-CoA = 9-cis-retinyl hexadecanoate + CoA. The enzyme catalyses 13-cis-retinol + tetradecanoyl-CoA = 13-cis-retinyl tetradecanoate + CoA. The catalysed reaction is all-trans-retinol + tetradecanoyl-CoA = all-trans-retinyl tetradecanoate + CoA. It carries out the reaction tetradecan-1-ol + tetradecanoyl-CoA = tetradecanyl tetradecanoate + CoA. Its activity is regulated as follows. 11-cis retinoids act as allosteric modulators of acyl-CoA retinol O-fatty-acyltransferase (ARAT) activity by suppressing esterification of 9-cis, 13-cis, or all-trans retinols concurrently increasing the enzyme specificity toward 11-cis isomer. Functionally, acyltransferase that catalyzes the formation of ester bonds between fatty alcohols and fatty acyl-CoAs to form wax monoesters. Shows a preference for medium chain acyl-CoAs from C12 to C16 in length and fatty alcohols shorter than C20, as the acyl donor and acceptor, respectively. Also possesses fatty acyl-CoA retinol acyltransferase (ARAT) activity that preferentially esterifies 11-cis-retinol, a chromophore precursor of bleached opsin pigments in cone cells. Shows higher catalytic efficiency toward 11-cis-retinol versus 9-cis-retinol, 13- cis-retinol and all-trans-retinol substrates. This chain is Acyl-CoA wax alcohol acyltransferase 2 (Awat2), found in Mus musculus (Mouse).